Reading from the N-terminus, the 155-residue chain is 17.4 kDa class III heat shock protein (155 aa).

In terms of domain architecture, sHSP spans glycine 35 to serine 155.

The protein belongs to the small heat shock protein (HSP20) family. In terms of assembly, may form oligomeric structures.

It localises to the cytoplasm. This is 17.4 kDa class III heat shock protein (HSP17.4B) from Arabidopsis thaliana (Mouse-ear cress).